We begin with the raw amino-acid sequence, 600 residues long: Methylenetetrahydrofolate reductase 2 (600 aa).

Glutamate 22 functions as the Proton donor/acceptor in the catalytic mechanism. NAD(+) contacts are provided by residues 22-27 (EYFVPK) and 54-55 (TW). Residues 54–55 (TW), histidine 84, 114–116 (RGD), 133–134 (YA), tyrosine 156, aspartate 171, and lysine 178 contribute to the FAD site. Aspartate 116 serves as a coordination point for substrate. Substrate contacts are provided by glutamine 189 and tyrosine 282.

This sequence belongs to the methylenetetrahydrofolate reductase family. It depends on FAD as a cofactor.

The enzyme catalyses (6S)-5-methyl-5,6,7,8-tetrahydrofolate + NADP(+) = (6R)-5,10-methylene-5,6,7,8-tetrahydrofolate + NADPH + H(+). It functions in the pathway one-carbon metabolism; tetrahydrofolate interconversion. In Saccharomyces cerevisiae (strain ATCC 204508 / S288c) (Baker's yeast), this protein is Methylenetetrahydrofolate reductase 2 (MET13).